A 96-amino-acid polypeptide reads, in one-letter code: Uteroglobin (96 aa).

The N-terminal stretch at 1 to 21 is a signal peptide; the sequence is MKIAITMAVVMLSVCCSSASS.

The protein belongs to the secretoglobin family. In terms of assembly, antiparallel homodimer; disulfide-linked. Interaction with LMBR1L is controversial.

Its subcellular location is the secreted. Functionally, binds phosphatidylcholine, phosphatidylinositol, polychlorinated biphenyls (PCB) and weakly progesterone, potent inhibitor of phospholipase A2. The polypeptide is Uteroglobin (SCGB1A1) (Mesocricetus auratus (Golden hamster)).